Here is a 211-residue protein sequence, read N- to C-terminus: SsrA-binding protein (211 aa).

Residues 168–211 form a disordered region; it reads KHRLRRPRAQRNTQRSVTPRRTRENKNVRGSKARSARRNVRREN. The segment covering 177-186 has biased composition (polar residues); sequence QRNTQRSVTP. Residues 196–211 are compositionally biased toward basic residues; that stretch reads RGSKARSARRNVRREN.

Belongs to the SmpB family.

The protein resides in the cytoplasm. In terms of biological role, required for rescue of stalled ribosomes mediated by trans-translation. Binds to transfer-messenger RNA (tmRNA), required for stable association of tmRNA with ribosomes. tmRNA and SmpB together mimic tRNA shape, replacing the anticodon stem-loop with SmpB. tmRNA is encoded by the ssrA gene; the 2 termini fold to resemble tRNA(Ala) and it encodes a 'tag peptide', a short internal open reading frame. During trans-translation Ala-aminoacylated tmRNA acts like a tRNA, entering the A-site of stalled ribosomes, displacing the stalled mRNA. The ribosome then switches to translate the ORF on the tmRNA; the nascent peptide is terminated with the 'tag peptide' encoded by the tmRNA and targeted for degradation. The ribosome is freed to recommence translation, which seems to be the essential function of trans-translation. The sequence is that of SsrA-binding protein from Tropheryma whipplei (strain Twist) (Whipple's bacillus).